Consider the following 590-residue polypeptide: Aspartate--tRNA ligase (590 aa).

Glu174 is a binding site for L-aspartate. Positions 198 to 201 are aspartate; it reads QLMK. Residue Arg220 participates in L-aspartate binding. ATP is bound by residues 220 to 222 and Gln229; that span reads RDE. His443 contacts L-aspartate. Glu484 contacts ATP. An L-aspartate-binding site is contributed by Arg491. ATP is bound at residue 536 to 539; sequence GLDR.

Belongs to the class-II aminoacyl-tRNA synthetase family. Type 1 subfamily. As to quaternary structure, homodimer.

The protein localises to the cytoplasm. The catalysed reaction is tRNA(Asp) + L-aspartate + ATP = L-aspartyl-tRNA(Asp) + AMP + diphosphate. Functionally, catalyzes the attachment of L-aspartate to tRNA(Asp) in a two-step reaction: L-aspartate is first activated by ATP to form Asp-AMP and then transferred to the acceptor end of tRNA(Asp). This Lactococcus lactis subsp. cremoris (strain MG1363) protein is Aspartate--tRNA ligase.